The sequence spans 102 residues: Putative septation protein SpoVG 1 (102 aa).

Belongs to the SpoVG family.

In terms of biological role, could be involved in septation. The chain is Putative septation protein SpoVG 1 from Listeria innocua serovar 6a (strain ATCC BAA-680 / CLIP 11262).